A 305-amino-acid chain; its full sequence is Syntaxin-123 (305 aa).

Met1 is modified (N-acetylmethionine). Over 1-278 the chain is Cytoplasmic; it reads MNDLISSSFK…KVLQRNNRKW (278 aa). Residues 46–66 adopt a coiled-coil conformation; that stretch reads VKEDMKAVDEIHKRLQDANEE. The 63-residue stretch at 206 to 268 folds into the t-SNARE coiled-coil homology domain; sequence LSEIQERHDT…MRGTDQLHGA (63 aa). The chain crosses the membrane as a helical; Anchor for type IV membrane protein span at residues 279-299; sequence ACIATILAIVVVIVILFPILF. At 300–305 the chain is on the vesicular side; sequence NTLLRP.

It belongs to the syntaxin family. Part of the t-SNARE complex. Expressed in tips of root hairs.

The protein resides in the membrane. Vesicle trafficking protein that functions in the secretory pathway. Acts in coordination with SYP132 to mediate tip-focused membrane trafficking for root hair tip growth. Functions in root hair elongation by forming SNARE complexes with VAMP721,VAMP722 or VAMP724. This chain is Syntaxin-123, found in Arabidopsis thaliana (Mouse-ear cress).